The following is a 196-amino-acid chain: CASP-like protein 1D1 (196 aa).

Residues 1 to 18 are compositionally biased toward basic and acidic residues; it reads MASTDKPDRESIKSEEAP. The disordered stretch occupies residues 1 to 22; the sequence is MASTDKPDRESIKSEEAPAAHP. The Cytoplasmic portion of the chain corresponds to 1 to 29; it reads MASTDKPDRESIKSEEAPAAHPRRSNYSS. Residues 30 to 50 form a helical membrane-spanning segment; sequence VHVALRFLLFAASVTAVVVMV. Residues 51-84 lie on the Extracellular side of the membrane; it reads TAKQTKIVPVPGLPISVPLEAKFSDSPAFLYFIS. The helical transmembrane segment at 85–105 threads the bilayer; the sequence is ALSVAGLYGILTTLAAISIVL. Residues 106-112 are Cytoplasmic-facing; the sequence is KPAYATR. Residues 113-133 form a helical membrane-spanning segment; sequence FLLHFALLDVLMLGIVASATG. Topologically, residues 134–167 are extracellular; that stretch reads AAGGVAYVGLKGNSHVRWGKVCNVYDKFCQHVGS. Residues 168–188 form a helical membrane-spanning segment; sequence SIAVALFASVLLVLLTMLSVF. The Cytoplasmic segment spans residues 189–196; that stretch reads SIYRKIPK.

This sequence belongs to the Casparian strip membrane proteins (CASP) family. In terms of assembly, homodimer and heterodimers.

The protein resides in the cell membrane. The polypeptide is CASP-like protein 1D1 (Populus trichocarpa (Western balsam poplar)).